Here is a 389-residue protein sequence, read N- to C-terminus: MQTLDQLDVNGKRVLVRVDYNVPIKDGVVQDETRVTASLPTLQHLLARGAALVLLSHLGRPKNGPEEKYSLRPVAAVLERALGRPVKFIASLPSSEETRRAVESLQPGEVALLENVRFEPGEEKNDPELVEQLARLGDAFVLDAFGSAHRAHASVSGVAGRLPHAAGLLLHNEVEALSRLLHDPARPYVVIIGGAKVSDKIKVIENLLPRVDRMLIGGGMMFTFIRARGGQIGNSLVEEDQVAYARQLLEQYGDRLMLPTDAVAADRFAPDAQTRVVPADRIPDGWMGLDIGPETARAYAEALQGAKTVFWNGPMGVFEFPAFAAGTNAVAQAVAELGNQAYTVVGGGDSVSAINQSGQASKVSHISTGGGASLELLEGQLLPGVEAMK.

Substrate contacts are provided by residues 19–21, Arg34, 57–60, Arg117, and Arg150; these read DYN and HLGR. ATP is bound by residues Lys200, Gly288, Glu319, and 347 to 350; that span reads GGDS.

Belongs to the phosphoglycerate kinase family. As to quaternary structure, monomer.

It is found in the cytoplasm. It carries out the reaction (2R)-3-phosphoglycerate + ATP = (2R)-3-phospho-glyceroyl phosphate + ADP. The protein operates within carbohydrate degradation; glycolysis; pyruvate from D-glyceraldehyde 3-phosphate: step 2/5. This Deinococcus geothermalis (strain DSM 11300 / CIP 105573 / AG-3a) protein is Phosphoglycerate kinase.